The sequence spans 1962 residues: PIII-type proteinase (1962 aa).

The first 33 residues, 1–33, serve as a signal peptide directing secretion; that stretch reads MQRKKKGLSILLAGTVALGALAVLPVGEIQAKA. Residues 34–187 constitute a propeptide that is removed on maturation; it reads AISQQTKGSS…VTLAKVYYPT (154 aa). Residues 191 to 697 enclose the Peptidase S8 domain; it reads ANSMANVQAV…AGLVDVKAAI (507 aa). Active-site charge relay system residues include D217, H281, and S620. Positions 1796 to 1938 are disordered; it reads GKGDGTTGTS…KTGETTERPA (143 aa). Residues 1797–1812 show a composition bias toward gly residues; the sequence is KGDGTTGTSDKGGGQG. Polar residues-rich tracts occupy residues 1856-1865 and 1890-1903; these read RNGQLTSGTS and SQPS…TNPA. Residues 1927-1931 carry the LPXTG sorting signal motif; that stretch reads LPKTG. Pentaglycyl murein peptidoglycan amidated threonine is present on T1930. Residues 1931–1962 constitute a propeptide, removed by sortase; it reads GETTERPAFGFLGVIVVSLMGVLGLKRKQREE.

The protein belongs to the peptidase S8 family.

It localises to the secreted. The protein localises to the cell wall. The enzyme catalyses Endopeptidase activity with very broad specificity, although some subsite preference have been noted, e.g. large hydrophobic residues in the P1 and P4 positions, and Pro in the P2 position. Best known for its action on caseins, although it has been shown to hydrolyze hemoglobin and oxidized insulin B-chain.. Functionally, protease which breaks down milk proteins during the growth of the bacteria on milk. The sequence is that of PIII-type proteinase (prtP) from Lactococcus lactis subsp. cremoris (strain SK11).